Consider the following 463-residue polypeptide: UDP-N-acetylmuramoylalanine--D-glutamate ligase (463 aa).

109 to 115 is an ATP binding site; the sequence is GTDGKST.

This sequence belongs to the MurCDEF family.

It localises to the cytoplasm. The catalysed reaction is UDP-N-acetyl-alpha-D-muramoyl-L-alanine + D-glutamate + ATP = UDP-N-acetyl-alpha-D-muramoyl-L-alanyl-D-glutamate + ADP + phosphate + H(+). Its pathway is cell wall biogenesis; peptidoglycan biosynthesis. In terms of biological role, cell wall formation. Catalyzes the addition of glutamate to the nucleotide precursor UDP-N-acetylmuramoyl-L-alanine (UMA). This Leptospira interrogans serogroup Icterohaemorrhagiae serovar copenhageni (strain Fiocruz L1-130) protein is UDP-N-acetylmuramoylalanine--D-glutamate ligase.